The primary structure comprises 580 residues: NADH-ubiquinone oxidoreductase chain 5 (580 aa).

Transmembrane regions (helical) follow at residues 12–32 (FYIL…FLLM), 50–70 (IVMT…VLLI), 92–112 (ILLV…PNLI), 113–133 (SILL…IYFQ), 153–173 (VALL…YIFY), 176–196 (MMKN…AAMT), 218–240 (SALV…FNIL), 249–269 (FLLL…NFEF), 274–294 (IIAL…SIGY), 300–320 (FHLL…GVII), 343–363 (CSCF…AGFY), 378–400 (NFFS…FRLV), 427–447 (IFFL…LMFF), 464–484 (MVCL…FFFI), 500–520 (MWFM…ILGM), and 560–580 (IYLL…LFLN).

It belongs to the complex I subunit 5 family.

The protein localises to the mitochondrion inner membrane. The catalysed reaction is a ubiquinone + NADH + 5 H(+)(in) = a ubiquinol + NAD(+) + 4 H(+)(out). Its function is as follows. Core subunit of the mitochondrial membrane respiratory chain NADH dehydrogenase (Complex I) that is believed to belong to the minimal assembly required for catalysis. Complex I functions in the transfer of electrons from NADH to the respiratory chain. The immediate electron acceptor for the enzyme is believed to be ubiquinone. The polypeptide is NADH-ubiquinone oxidoreductase chain 5 (Aedes aegypti (Yellowfever mosquito)).